Consider the following 79-residue polypeptide: Translational regulator CsrA (79 aa).

The protein belongs to the CsrA/RsmA family. Homodimer; the beta-strands of each monomer intercalate to form a hydrophobic core, while the alpha-helices form wings that extend away from the core.

Its subcellular location is the cytoplasm. A translational regulator that binds mRNA to regulate translation initiation and/or mRNA stability. Usually binds in the 5'-UTR at or near the Shine-Dalgarno sequence preventing ribosome-binding, thus repressing translation. Its main target seems to be the major flagellin gene, while its function is anatagonized by FliW. This is Translational regulator CsrA from Shouchella clausii (strain KSM-K16) (Alkalihalobacillus clausii).